We begin with the raw amino-acid sequence, 283 residues long: Elongation factor Ts (283 aa).

Residues 79–82 (TDFV) are involved in Mg(2+) ion dislocation from EF-Tu.

This sequence belongs to the EF-Ts family.

The protein resides in the cytoplasm. Functionally, associates with the EF-Tu.GDP complex and induces the exchange of GDP to GTP. It remains bound to the aminoacyl-tRNA.EF-Tu.GTP complex up to the GTP hydrolysis stage on the ribosome. The protein is Elongation factor Ts of Shewanella baltica (strain OS155 / ATCC BAA-1091).